The following is a 208-amino-acid chain: Urease accessory protein UreG (208 aa).

10-17 provides a ligand contact to GTP; that stretch reads GPVGSGKT.

This sequence belongs to the SIMIBI class G3E GTPase family. UreG subfamily. Homodimer. UreD, UreF and UreG form a complex that acts as a GTP-hydrolysis-dependent molecular chaperone, activating the urease apoprotein by helping to assemble the nickel containing metallocenter of UreC. The UreE protein probably delivers the nickel.

The protein resides in the cytoplasm. Functionally, facilitates the functional incorporation of the urease nickel metallocenter. This process requires GTP hydrolysis, probably effectuated by UreG. In Halalkalibacterium halodurans (strain ATCC BAA-125 / DSM 18197 / FERM 7344 / JCM 9153 / C-125) (Bacillus halodurans), this protein is Urease accessory protein UreG.